Consider the following 264-residue polypeptide: DNA repair protein RecO (264 aa).

It belongs to the RecO family.

In terms of biological role, involved in DNA repair and RecF pathway recombination. This Chlorobium luteolum (strain DSM 273 / BCRC 81028 / 2530) (Pelodictyon luteolum) protein is DNA repair protein RecO.